Consider the following 239-residue polypeptide: tRNA (guanine-N(7)-)-methyltransferase (239 aa).

Residues Glu-69, Glu-94, Asp-121, and Asp-144 each coordinate S-adenosyl-L-methionine. Asp-144 is a catalytic residue. Substrate contacts are provided by residues Lys-148, Asp-180, and 217–220 (TKFE).

It belongs to the class I-like SAM-binding methyltransferase superfamily. TrmB family.

It carries out the reaction guanosine(46) in tRNA + S-adenosyl-L-methionine = N(7)-methylguanosine(46) in tRNA + S-adenosyl-L-homocysteine. Its pathway is tRNA modification; N(7)-methylguanine-tRNA biosynthesis. Functionally, catalyzes the formation of N(7)-methylguanine at position 46 (m7G46) in tRNA. This is tRNA (guanine-N(7)-)-methyltransferase from Pseudoalteromonas atlantica (strain T6c / ATCC BAA-1087).